A 1111-amino-acid chain; its full sequence is ATP-dependent DNA helicase mph1 (1111 aa).

Composition is skewed to acidic residues over residues 1-18 (MSVSGDDSDDYFDHEIDD) and 47-65 (VFDESDISIDQGDGEDEFQ). 4 disordered regions span residues 1-81 (MSVS…EDVE), 101-144 (FVTQ…HQPD), 210-240 (AFDSDLSLSPPRTTSQATRGPPVQSQFRTNR), and 259-280 (IPSQRGEQILSPPEKNEPPTHH). 2 stretches are compositionally biased toward polar residues: residues 132–143 (PTTTTVDASHQP) and 215–238 (LSLSPPRTTSQATRGPPVQSQFRT). Residues 306–474 (IAQRGLFHNL…AVIDGLGIAK (169 aa)) enclose the Helicase ATP-binding domain. 319-326 (LPTGLGKT) provides a ligand contact to ATP. Residues 422–425 (DEAH) carry the DEAH box motif. Residues 644-818 (YLKQVVLNHF…GTRFTFHDDT (175 aa)) form the Helicase C-terminal domain. Disordered regions lie at residues 836–898 (IDIP…RKPT), 998–1047 (SVLS…CTPE), and 1092–1111 (AERHVSRKRNRFVLDDDTEE). Residues 852–864 (KRARPPKRPPKKF) show a composition bias toward basic residues.

Belongs to the DEAD box helicase family. DEAH subfamily. FANCM sub-subfamily. As to quaternary structure, interacts with the MHF histone-fold complex to form the FANCM-MHF complex.

It is found in the nucleus. It catalyses the reaction ATP + H2O = ADP + phosphate + H(+). In terms of biological role, ATP-dependent DNA helicase involved in DNA damage repair by homologous recombination and in genome maintenance. Capable of unwinding D-loops. Plays a role in limiting crossover recombinants during mitotic DNA double-strand break (DSB) repair. Component of a FANCM-MHF complex which promotes gene conversion at blocked replication forks, probably by reversal of the stalled fork. This Neosartorya fischeri (strain ATCC 1020 / DSM 3700 / CBS 544.65 / FGSC A1164 / JCM 1740 / NRRL 181 / WB 181) (Aspergillus fischerianus) protein is ATP-dependent DNA helicase mph1.